The chain runs to 301 residues: Protein SCO2, mitochondrial (301 aa).

Residues 82–98 traverse the membrane as a helical segment; sequence ATIALLLLSGGTYAYLS. The region spanning 101 to 284 is the Thioredoxin domain; sequence RRLLETEKEA…IREQIQAYVP (184 aa). Residues C154, C158, and H245 each contribute to the Cu cation site.

It belongs to the SCO1/2 family.

It is found in the mitochondrion inner membrane. In terms of biological role, acts as a copper chaperone, transporting copper to the Cu(A) site on the cytochrome c oxidase subunit II (COX2). The protein is Protein SCO2, mitochondrial (SCO2) of Saccharomyces cerevisiae (strain ATCC 204508 / S288c) (Baker's yeast).